The chain runs to 40 residues: Photosystem II reaction center protein J (40 aa).

The helical transmembrane segment at 8–28 threads the bilayer; that stretch reads IPLWIIGTVAGIVVIGLIGLF.

Belongs to the PsbJ family. PSII is composed of 1 copy each of membrane proteins PsbA, PsbB, PsbC, PsbD, PsbE, PsbF, PsbH, PsbI, PsbJ, PsbK, PsbL, PsbM, PsbT, PsbX, PsbY, PsbZ, Psb30/Ycf12, at least 3 peripheral proteins of the oxygen-evolving complex and a large number of cofactors. It forms dimeric complexes.

Its subcellular location is the plastid. It localises to the chloroplast thylakoid membrane. One of the components of the core complex of photosystem II (PSII). PSII is a light-driven water:plastoquinone oxidoreductase that uses light energy to abstract electrons from H(2)O, generating O(2) and a proton gradient subsequently used for ATP formation. It consists of a core antenna complex that captures photons, and an electron transfer chain that converts photonic excitation into a charge separation. The protein is Photosystem II reaction center protein J of Pisum sativum (Garden pea).